A 187-amino-acid polypeptide reads, in one-letter code: Ribosome-recycling factor (187 aa).

It belongs to the RRF family.

The protein resides in the cytoplasm. Responsible for the release of ribosomes from messenger RNA at the termination of protein biosynthesis. May increase the efficiency of translation by recycling ribosomes from one round of translation to another. This is Ribosome-recycling factor from Ligilactobacillus salivarius (strain UCC118) (Lactobacillus salivarius).